A 163-amino-acid polypeptide reads, in one-letter code: Nucleotide-binding protein CYB_0891 (163 aa).

Belongs to the YajQ family.

Nucleotide-binding protein. The protein is Nucleotide-binding protein CYB_0891 of Synechococcus sp. (strain JA-2-3B'a(2-13)) (Cyanobacteria bacterium Yellowstone B-Prime).